Reading from the N-terminus, the 616-residue chain is Dihydroxy-acid dehydratase (616 aa).

Residue Asp-81 coordinates Mg(2+). Cys-122 provides a ligand contact to [2Fe-2S] cluster. Mg(2+) is bound by residues Asp-123 and Lys-124. Lys-124 carries the N6-carboxylysine modification. Cys-195 contributes to the [2Fe-2S] cluster binding site. Glu-491 lines the Mg(2+) pocket. Ser-517 (proton acceptor) is an active-site residue.

The protein belongs to the IlvD/Edd family. Homodimer. The cofactor is [2Fe-2S] cluster. Requires Mg(2+) as cofactor.

The enzyme catalyses (2R)-2,3-dihydroxy-3-methylbutanoate = 3-methyl-2-oxobutanoate + H2O. It catalyses the reaction (2R,3R)-2,3-dihydroxy-3-methylpentanoate = (S)-3-methyl-2-oxopentanoate + H2O. Its pathway is amino-acid biosynthesis; L-isoleucine biosynthesis; L-isoleucine from 2-oxobutanoate: step 3/4. It participates in amino-acid biosynthesis; L-valine biosynthesis; L-valine from pyruvate: step 3/4. Functionally, functions in the biosynthesis of branched-chain amino acids. Catalyzes the dehydration of (2R,3R)-2,3-dihydroxy-3-methylpentanoate (2,3-dihydroxy-3-methylvalerate) into 2-oxo-3-methylpentanoate (2-oxo-3-methylvalerate) and of (2R)-2,3-dihydroxy-3-methylbutanoate (2,3-dihydroxyisovalerate) into 2-oxo-3-methylbutanoate (2-oxoisovalerate), the penultimate precursor to L-isoleucine and L-valine, respectively. This chain is Dihydroxy-acid dehydratase, found in Tolumonas auensis (strain DSM 9187 / NBRC 110442 / TA 4).